We begin with the raw amino-acid sequence, 937 residues long: C-1-tetrahydrofolate synthase, cytoplasmic (937 aa).

The interval 1 to 309 (MALLLEGTSL…TLLPLKLQTP (309 aa)) is methylenetetrahydrofolate dehydrogenase and cyclohydrolase. Residues 50–54 (YVRMK) and 97–99 (VQL) each bind substrate. Residues 168–170 (GRS) and Ser-193 each bind NADP(+). Residue 268 to 272 (PGSVG) coordinates substrate. The formyltetrahydrofolate synthetase stretch occupies residues 310-937 (VPSDIEIARS…AENGDIVGLS (628 aa)). Residue 374-381 (TPFGEGKS) coordinates ATP.

This sequence in the N-terminal section; belongs to the tetrahydrofolate dehydrogenase/cyclohydrolase family. It in the C-terminal section; belongs to the formate--tetrahydrofolate ligase family. As to quaternary structure, homodimer.

It is found in the cytoplasm. The catalysed reaction is (6R)-5,10-methylene-5,6,7,8-tetrahydrofolate + NADP(+) = (6R)-5,10-methenyltetrahydrofolate + NADPH. The enzyme catalyses (6R)-5,10-methenyltetrahydrofolate + H2O = (6R)-10-formyltetrahydrofolate + H(+). It carries out the reaction (6S)-5,6,7,8-tetrahydrofolate + formate + ATP = (6R)-10-formyltetrahydrofolate + ADP + phosphate. The protein operates within one-carbon metabolism; tetrahydrofolate interconversion. The chain is C-1-tetrahydrofolate synthase, cytoplasmic from Schizosaccharomyces pombe (strain 972 / ATCC 24843) (Fission yeast).